The following is a 412-amino-acid chain: MIIRNFPKQTNSLLPFELNPNKFPSYYGYPMYGYTGSYRNIEFPISQNGNFLQATSGNPPGRRVPEPIYSSGVQRSTRINYLPSSQSCAPFQSHADCDKSPNSKGGESYDWNYGWSSCCSGFCPSKRECAKPDPKECDIGNDILDRDPLLKIEWDVNAPNYRCTYDLHKINTSEQINLFVGKNGKNKSYDEIMTSFCEIPSHICPIDPGDGSLNDDKRGKEMEKCSRLISLDDEGTRCRAWAATQDNKTIDNIKEEYCLHNPNSPDCRCINRSSNSLYDEAKKNNPFPDGCWYKPCSTSVYLKTSDILSDEKHCPKEMCQVIYNVNQNNDVVIKDNTNNIKCDFTKFIPPTPGPNPGPTPGPNPGPIIPPINPLPLPNPTFLENKNVLITGIAVTGVAVLLFLLLMFKSKTT.

Asn-171, Asn-186, Asn-247, and Asn-271 each carry an N-linked (GlcNAc...) asparagine; by host glycan. The helical transmembrane segment at 387 to 407 threads the bilayer; it reads VLITGIAVTGVAVLLFLLLMF.

It belongs to the IIV-6 337L family.

It is found in the virion membrane. The polypeptide is Putative membrane protein 337L (Acheta domesticus (House cricket)).